The primary structure comprises 761 residues: Zinc finger protein 711 (761 aa).

Glycyl lysine isopeptide (Lys-Gly) (interchain with G-Cter in SUMO2) cross-links involve residues Lys224, Lys235, and Lys296. 5 C2H2-type zinc fingers span residues Tyr383 to His408, Tyr414 to His436, His476 to His499, His505 to His527, and Tyr533 to His556. The C2H2-type 6; atypical zinc-finger motif lies at Tyr562–Phe584. Zn(2+) is bound by residues Cys564, Cys567, and His580. 6 consecutive C2H2-type zinc fingers follow at residues His590 to His613, His619 to His641, His647 to His670, Leu676 to His698, Tyr704 to His727, and His733 to His755.

It belongs to the krueppel C2H2-type zinc-finger protein family. In terms of assembly, interacts with PHF8.

It is found in the nucleus. Its function is as follows. Transcription regulator required for brain development. Probably acts as a transcription factor that binds to the promoter of target genes and recruits PHF8 histone demethylase, leading to activated expression of genes involved in neuron development, such as KDM5C. May compete with transcription factor ARX for activation of expression of KDM5C. This is Zinc finger protein 711 (Znf711) from Mus musculus (Mouse).